A 933-amino-acid chain; its full sequence is Progesterone receptor (933 aa).

An AF3; mediates transcriptional activation region spans residues 1-164 (MTELKAKGPR…PATQRVLSPL (164 aa)). A disordered region spans residues 1–256 (MTELKAKGPR…AAAGGGAAAV (256 aa)). Residues 1–566 (MTELKAKGPR…YSFESLPQKI (566 aa)) form a modulating, Pro-Rich region. Position 20 is a phosphoserine (serine 20). 2 consecutive short sequence motifs (LXXL motif) follow at residues 55-59 (LDGLL) and 115-119 (LDTLL). 2 positions are modified to phosphoserine: serine 130 and serine 162. The mediates transcriptional transrepression stretch occupies residues 165-305 (MSRSGGKAGD…LATTTMDFIH (141 aa)). Positions 183-187 (KVLPR) match the Nuclear localization signal motif. Phosphoserine occurs at positions 190 and 213. The span at 220 to 231 (EVEEEDGSESED) shows a compositional bias: acidic residues. At serine 294 the chain carries Phosphoserine; by MAPK1. Positions 332-380 (GAGAASAFAPPRSSPSASSTPVAVGDFPDCAYPPDADPKDDAYPLYGDF) are disordered. The segment covering 335–350 (AASAFAPPRSSPSASS) has biased composition (low complexity). Serine 345 is subject to Phosphoserine; by MAPK. Lysine 388 participates in a covalent cross-link: Glycyl lysine isopeptide (Lys-Gly) (interchain with G-Cter in SUMO); alternate. Residue lysine 388 forms a Glycyl lysine isopeptide (Lys-Gly) (interchain with G-Cter in ubiquitin); alternate linkage. Residue serine 400 is modified to Phosphoserine; by CDK2. A disordered region spans residues 415–454 (PDFPLGPPPPLPPRAPPSRPGEAAVTAAPASASVSSSSSS). Positions 418 to 433 (PLGPPPPLPPRAPPSR) are enriched in pro residues. Over residues 434 to 454 (PGEAAVTAAPASASVSSSSSS) the composition is skewed to low complexity. The tract at residues 456–546 (STLECILYKA…VYPPYLNYLR (91 aa)) is AF1; mediates transcriptional activation. Lysine 531 participates in a covalent cross-link: Glycyl lysine isopeptide (Lys-Gly) (interchain with G-Cter in SUMO). 2 NR C4-type zinc fingers span residues 567–587 (CLIC…CGSC) and 603–627 (CAGR…LRKC). Positions 567 to 639 (CLICGDEASG…AGMVLGGRKF (73 aa)) form a DNA-binding region, nuclear receptor. Serine 676 bears the Phosphoserine mark. Residues 679–913 (QDIQFFPPLI…EFPEMMSEVI (235 aa)) enclose the NR LBD domain. An AF2; mediates transcriptional activation region spans residues 687 to 933 (LINLLVSIEP…MVKPLLFHKK (247 aa)). Arginine 766 is a binding site for progesterone.

This sequence belongs to the nuclear hormone receptor family. In terms of assembly, interacts with SMARD1 and UNC45A. Interacts with CUEDC2; the interaction promotes ubiquitination, decreases sumoylation, and represses transcriptional activity. Interacts with PIAS3; the interaction promotes sumoylation of PR in a hormone-dependent manner, inhibits DNA-binding, and alters nuclear export. Interacts with SP1; the interaction requires ligand-induced phosphorylation on Ser-345 by ERK1/2-MAPK. Interacts with PRMT2. Interacts with NCOA2 and NCOA1. Interacts with KLF9. Interacts with GTF2B. Phosphorylated on multiple serine sites. Several of these sites are hormone-dependent. Phosphorylation on Ser-294 is highly hormone-dependent and modulates ubiquitination and sumoylation on Lys-388. Phosphorylation on Ser-345 also requires induction by hormone. Basal phosphorylation on Ser-162, Ser-190 and Ser-400 is increased in response to progesterone and can be phosphorylated in vitro by the CDK2-A1 complex. Increased levels of phosphorylation on Ser-400 also in the presence of EGF, heregulin, IGF, PMA and FBS. Phosphorylation at this site by CDK2 is ligand-independent, and increases nuclear translocation and transcriptional activity. Phosphorylation at Ser-162 and Ser-294, but not at Ser-190, is impaired during the G(2)/M phase of the cell cycle. Phosphorylation on Ser-345 by ERK1/2 MAPK is required for interaction with SP1. Post-translationally, sumoylation is hormone-dependent and represses transcriptional activity. Sumoylation on all three sites is enhanced by PIAS3. Desumoylated by SENP1. Sumoylation on Lys-388, the main site of sumoylation, is repressed by ubiquitination on the same site, and modulated by phosphorylation at Ser-294. In terms of processing, ubiquitination is hormone-dependent and represses sumoylation on the same site. Promoted by MAPK-mediated phosphorylation on Ser-294. Ubiquitinated by UBR5, leading to its degradation: UBR5 specifically recognizes and binds ligand-bound PGR when it is not associated with coactivators (NCOAs). In presence of NCOAs, the UBR5-degron is not accessible, preventing its ubiquitination and degradation. Palmitoylated by ZDHHC7 and ZDHHC21. Palmitoylation is required for plasma membrane targeting and for rapid intracellular signaling via ERK and AKT kinases and cAMP generation.

The protein resides in the nucleus. The protein localises to the cytoplasm. In terms of biological role, the steroid hormones and their receptors are involved in the regulation of eukaryotic gene expression and affect cellular proliferation and differentiation in target tissues. Transcriptional activator of several progesteron-dependent promoters in a variety of cell types. Involved in activation of SRC-dependent MAPK signaling on hormone stimulation. The sequence is that of Progesterone receptor (PGR) from Chlorocebus aethiops (Green monkey).